A 722-amino-acid chain; its full sequence is Exocyst complex component 3-like protein 4 (722 aa).

Disordered stretches follow at residues 1 to 53 and 92 to 131; these read MPSP…LGSL and NDGP…KPEA. Basic and acidic residues predominate over residues 34-46; the sequence is SRKEPNAHRKDGT. A Phosphoserine modification is found at serine 52. Residues 113 to 122 show a composition bias toward polar residues; that stretch reads GVSQQASTGA. Serine 513 bears the Phosphoserine mark.

Belongs to the SEC6 family.

The protein is Exocyst complex component 3-like protein 4 (EXOC3L4) of Homo sapiens (Human).